Reading from the N-terminus, the 309-residue chain is UPF0282 protein Msed_0584 (309 aa).

The protein belongs to the UPF0282 family.

This is UPF0282 protein Msed_0584 from Metallosphaera sedula (strain ATCC 51363 / DSM 5348 / JCM 9185 / NBRC 15509 / TH2).